The primary structure comprises 97 residues: Aspartyl/glutamyl-tRNA(Asn/Gln) amidotransferase subunit C (97 aa).

It belongs to the GatC family. As to quaternary structure, heterotrimer of A, B and C subunits.

It carries out the reaction L-glutamyl-tRNA(Gln) + L-glutamine + ATP + H2O = L-glutaminyl-tRNA(Gln) + L-glutamate + ADP + phosphate + H(+). It catalyses the reaction L-aspartyl-tRNA(Asn) + L-glutamine + ATP + H2O = L-asparaginyl-tRNA(Asn) + L-glutamate + ADP + phosphate + 2 H(+). Functionally, allows the formation of correctly charged Asn-tRNA(Asn) or Gln-tRNA(Gln) through the transamidation of misacylated Asp-tRNA(Asn) or Glu-tRNA(Gln) in organisms which lack either or both of asparaginyl-tRNA or glutaminyl-tRNA synthetases. The reaction takes place in the presence of glutamine and ATP through an activated phospho-Asp-tRNA(Asn) or phospho-Glu-tRNA(Gln). This Prochlorococcus marinus (strain MIT 9303) protein is Aspartyl/glutamyl-tRNA(Asn/Gln) amidotransferase subunit C.